A 402-amino-acid polypeptide reads, in one-letter code: ORC1-type DNA replication protein 17 (402 aa).

ATP contacts are provided by tyrosine 223 and arginine 235.

Belongs to the CDC6/cdc18 family.

Involved in regulation of DNA replication. The chain is ORC1-type DNA replication protein 17 (cdc6q) from Haloarcula marismortui (strain ATCC 43049 / DSM 3752 / JCM 8966 / VKM B-1809) (Halobacterium marismortui).